We begin with the raw amino-acid sequence, 481 residues long: MAKKDQEFVKDITNMDEDFPQWYTDVITKTDLVDYSPVKGFMVIKPYGYAIWENIQAFLDRRFKETGHQNCYFPLLIPESLLNKEKEHVEGFAPEVAWVTHGGSEKLAERLCVRPTSETIICSMYSKWLTSYRELPYLYNQWCSVVRWEKSTRPFLRTSEFLWQEGHTLHETAEEAQAETLQMLAIYKEMAEDLLAIPVVDGRKSDRERFAGAAATYTIEALMHDGKALQSGTSHNLAQHFTKAFDITFQGRTGELEYPHHTSWGASTRLIGGIIMVHGDNRGLVLPPRVAPTQVVIIPIAQNKEGVLDKAYEIKKELEAKGIRVTLDDDTNYSPGWKFNQYEMKGVPLRLEIGPRDIENNVAMIARRDTLSKDSYSLDNIGDTVKNLLDTVHTDMLERARAHRDSKTFTFKDYEEFKRKMIETPGFAKGMWCGEEECEAKIKEDTGVTIRCIPFVQENLGETCQFCGKPAKHMVYLAKAY.

The protein belongs to the class-II aminoacyl-tRNA synthetase family. ProS type 3 subfamily. Homodimer.

It is found in the cytoplasm. The enzyme catalyses tRNA(Pro) + L-proline + ATP = L-prolyl-tRNA(Pro) + AMP + diphosphate. Functionally, catalyzes the attachment of proline to tRNA(Pro) in a two-step reaction: proline is first activated by ATP to form Pro-AMP and then transferred to the acceptor end of tRNA(Pro). Can inadvertently accommodate and process cysteine. Misacylated Cys-tRNA(Pro) is not edited by ProRS; this function may be provided by ProX. This chain is Proline--tRNA ligase (proS), found in Acetoanaerobium sticklandii (strain ATCC 12662 / DSM 519 / JCM 1433 / CCUG 9281 / NCIMB 10654 / HF) (Clostridium sticklandii).